The following is a 224-amino-acid chain: Adenylate kinase (224 aa).

ATP is bound at residue 10 to 15 (GSGKST). An NMP region spans residues 30 to 59 (ASGDIIRAEINKGNALGREMKKYIEKGDLL). Residues S31, R36, 57–59 (DLL), 83–86 (GYPR), and Q90 each bind AMP. The segment at 124–161 (GRRICRQCGAVYHIKYNPSKVPGKCDICGGEVIQREDD) is LID. R125 provides a ligand contact to ATP. 2 residues coordinate Zn(2+): C128 and C131. Residue 134–135 (VY) coordinates ATP. Positions 148 and 151 each coordinate Zn(2+). 2 residues coordinate AMP: R158 and R169. An ATP-binding site is contributed by G197.

This sequence belongs to the adenylate kinase family. As to quaternary structure, monomer.

The protein resides in the cytoplasm. The catalysed reaction is AMP + ATP = 2 ADP. It participates in purine metabolism; AMP biosynthesis via salvage pathway; AMP from ADP: step 1/1. Catalyzes the reversible transfer of the terminal phosphate group between ATP and AMP. Plays an important role in cellular energy homeostasis and in adenine nucleotide metabolism. This chain is Adenylate kinase, found in Thermococcus sibiricus (strain DSM 12597 / MM 739).